Reading from the N-terminus, the 457-residue chain is uncharacterized protein (457 aa).

One can recognise a TRAM domain in the interval 10–69 (ALLQGQTVTVPITALAAGGDGIARLTDGRVLFVAGAVPGDTVEARLVHLKKDHGFGKILQ). 4 residues coordinate [4Fe-4S] cluster: Cys-82, Cys-88, Cys-91, and Cys-170. S-adenosyl-L-methionine is bound by residues Gln-294, Tyr-323, Glu-344, and Asp-387. The active-site Nucleophile is Cys-414.

The protein belongs to the class I-like SAM-binding methyltransferase superfamily. RNA M5U methyltransferase family.

This is an uncharacterized protein from Gloeobacter violaceus (strain ATCC 29082 / PCC 7421).